Reading from the N-terminus, the 216-residue chain is Heart- and neural crest derivatives-expressed protein 1 (216 aa).

Disordered regions lie at residues 1–20 (MNLVGSYAHHHHHHHSHPPH), 53–109 (APDF…RTES), and 165–203 (ELKKTDGGRESKRKRELPQQPESFPPASGPGEKRIKGRT). The segment covering 8–18 (AHHHHHHHSHP) has biased composition (basic residues). Low complexity predominate over residues 65 to 78 (TAVAAAAYGPDARP). Residues 92–104 (LPKRKGSGPKKER) show a composition bias toward basic residues. The region spanning 94 to 146 (KRKGSGPKKERRRTESINSAFAELRECIPNVPADTKLSKIKTLRLATSYIAYL) is the bHLH domain. A Phosphothreonine; by PLK4 modification is found at Thr107. At Ser109 the chain carries Phosphoserine; by PLK4. Basic and acidic residues predominate over residues 165–174 (ELKKTDGGRE).

Efficient DNA binding requires dimerization with another bHLH protein. Forms homodimers and heterodimers with TCF3 gene products E12 and E47, HAND2 and HEY1, HEY2 and HEYL (hairy-related transcription factors). Interacts with MDFIC. Interacts with SOX15; the interaction enhances HAND1-induced differentiation of trophoblast giant cells. In terms of processing, phosphorylation by PLK4 disrupts the interaction with MDFIC and leads to translocation into the nucleoplasm, allowing dimerization and transcription factor activity. Smooth muscle cells of the gut and adrenal tissue.

The protein resides in the nucleus. It is found in the nucleoplasm. Its subcellular location is the nucleolus. Functionally, transcription factor that plays an essential role in both trophoblast giant cell differentiation and in cardiac morphogenesis. Binds the DNA sequence 5'-NRTCTG-3' (non-canonical E-box). Acts as a transcriptional repressor of SOX15. In the adult, could be required for ongoing expression of cardiac-specific genes. The sequence is that of Heart- and neural crest derivatives-expressed protein 1 (Hand1) from Mus musculus (Mouse).